The sequence spans 984 residues: Pre-mRNA-splicing factor cwf10 (984 aa).

The disordered stretch occupies residues 1 to 28; it reads MMEEDLYDEFGNYIGPENEEDEEELFPQ. Residues 139–402 enclose the tr-type G domain; sequence DDVRSFIVAG…HTLTISDEAE (264 aa). Positions 148–155 are G1; that stretch reads GHLHHGKS. 148–155 is a binding site for GTP; it reads GHLHHGKS. Residues 190–194 form a G2 region; it reads VMSIK. The G3 stretch occupies residues 216 to 219; that stretch reads DTPG. GTP-binding positions include 216-220 and 270-273; these read DTPGH and NKVD. Positions 270 to 273 are G4; that stretch reads NKVD. Residues 371-373 form a G5 region; that stretch reads QSL.

It belongs to the TRAFAC class translation factor GTPase superfamily. Classic translation factor GTPase family. EF-G/EF-2 subfamily. Belongs to the 40S cdc5-associated complex (or cwf complex), a spliceosome sub-complex reminiscent of a late-stage spliceosome composed of the U2, U5 and U6 snRNAs and at least brr2, cdc5, cwf2/prp3, cwf3/syf1, cwf4/syf3, cwf5/ecm2, spp42/cwf6, cwf7/spf27, cwf8, cwf9, cwf10, cwf11, cwf12, prp45/cwf13, cwf14, cwf15, cwf16, cwf17, cwf18, cwf19, cwf20, cwf21, cwf22, cwf23, cwf24, cwf25, cwf26, cyp7/cwf27, cwf28, cwf29/ist3, lea1, msl1, prp5/cwf1, prp10, prp12/sap130, prp17, prp22, sap61, sap62, sap114, sap145, slu7, smb1, smd1, smd3, smf1, smg1 and syf2.

The protein resides in the cytoplasm. The protein localises to the nucleus. Component of the U5 snRNP complex required for pre-mRNA splicing. Binds GTP. The sequence is that of Pre-mRNA-splicing factor cwf10 (cwf10) from Schizosaccharomyces pombe (strain 972 / ATCC 24843) (Fission yeast).